A 427-amino-acid chain; its full sequence is ATP-sensitive inward rectifier potassium channel 12 (427 aa).

The Cytoplasmic portion of the chain corresponds to 1–77 (MTAASRANPY…LADMFTTCVD (77 aa)). Cys75 carries the post-translational modification S-nitrosocysteine. The chain crosses the membrane as a helical span at residues 78-104 (IRWRYMLLIFSLAFLASWLLFGIIFWV). Arg79 and Arg81 together coordinate a 1,2-diacyl-sn-glycero-3-phospho-(1D-myo-inositol-4,5-bisphosphate). Topologically, residues 105–129 (IAVAHGDLEPAEGRGRTPCVLQVHG) are extracellular. Cys123 and Cys155 are disulfide-bonded. Positions 130–146 (FMAAFLFSIETQTTIGY) form an intramembrane region, helical; Pore-forming. Residues Thr143, Ile144, Gly145, and Tyr146 each coordinate K(+). The Selectivity filter signature appears at 143–148 (TIGYGL). Residues 147 to 155 (GLRCVTEEC) are Extracellular-facing. Residues 156–183 (PVAVFMVVAQSIVGCIIDSFMIGAIMAK) form a helical membrane-spanning segment. A 1,2-diacyl-sn-glycero-3-phospho-(1D-myo-inositol-4,5-bisphosphate) contacts are provided by Lys183 and Lys188. Topologically, residues 184-427 (MARPKKRAQT…ERPYRRESEI (244 aa)) are cytoplasmic. The segment at 387-427 (DEEDEVATDRDGRSPQPEHDFDRLQASSAALERPYRRESEI) is disordered. The segment covering 393–409 (ATDRDGRSPQPEHDFDR) has biased composition (basic and acidic residues). The short motif at 425-427 (SEI) is the PDZ-binding element.

The protein belongs to the inward rectifier-type potassium channel (TC 1.A.2.1) family. KCNJ12 subfamily. In terms of assembly, homotetramer. Forms heteromer with KCNJ4. Can form heteromeric channels with Kir2.6/KCNJ18. Association, via its PDZ-recognition domain, with LIN7A, LIN7B, LIN7C, DLG1, CASK and APBA1 plays a key role in its localization and trafficking. As to expression, highest level in cerebellum.

The protein localises to the membrane. It is found in the cell membrane. It localises to the sarcolemma. The protein resides in the T-tubule. The catalysed reaction is K(+)(in) = K(+)(out). With respect to regulation, activated by phosphatidylinositol 4,5-biphosphate (PtdIns(4,5)P2). PtdIns(4,5)P2 binding to the cytoplasmic side of the channel triggers a conformation change leading to channel opening. Inhibited by Ba(2+). Its function is as follows. Inward rectifying potassium channel that probably participates in controlling the resting membrane potential in electrically excitable cells. It probably participates in establishing action potential waveform and excitability of neuronal and muscle tissues. Inward rectifier potassium channels are characterized by a greater tendency to allow potassium to flow into the cell rather than out of it. Their voltage dependence is regulated by the concentration of extracellular potassium; as external potassium is raised, the voltage range of the channel opening shifts to more positive voltages. The inward rectification is mainly due to the blockage of outward current by internal magnesium. This chain is ATP-sensitive inward rectifier potassium channel 12 (Kcnj12), found in Mus musculus (Mouse).